The chain runs to 153 residues: uncharacterized protein (153 aa).

The segment at 72–98 (LPISKTNDAERSQQTTKAPVMERTESS) is disordered.

The protein resides in the cytoplasm. Its subcellular location is the nucleus. This is an uncharacterized protein from Schizosaccharomyces pombe (strain 972 / ATCC 24843) (Fission yeast).